The chain runs to 53 residues: Lantibiotic paenibacillin (53 aa).

A propeptide spanning residues 1-24 (MKVDQMFDLDLRKSYEASELSPQA) is cleaved from the precursor. A24 is modified (N-acetylalanine). At S25 the chain carries 2,3-didehydroalanine (Ser). T29 and T30 each carry 2,3-didehydrobutyrine. A cross-link (lanthionine (Ser-Cys)) is located at residues 34–38 (SKAVC). 3 cross-links (beta-methyllanthionine (Thr-Cys)) span residues 40-43 (TLTC), 42-45 (TCIC), and 46-49 (TGSC). A cross-link (lanthionine (Ser-Cys)) is located at residues 48–52 (SCSNC). Position 50 is a 2,3-didehydroalanine (Ser) (S50).

Post-translationally, maturation of lantibiotics involves the enzymatic conversion of Thr, and Ser into dehydrated AA and the formation of thioether bonds with cysteine. This is followed by membrane translocation and cleavage of the modified precursor. The structure of the 2,3-didehydrobutyrines is not discussed in PubMed:17071789.

Its subcellular location is the secreted. Functionally, lanthionine-containing peptide antibiotic (lantibiotic) active on Gram-positive bacteria. The bactericidal activity of lantibiotics is based on depolarization of energized bacterial cytoplasmic membranes, initiated by the formation of aqueous transmembrane pores. Lacks antibacterial activity against Gram-negative bacteria. The chain is Lantibiotic paenibacillin from Paenibacillus polymyxa (Bacillus polymyxa).